Reading from the N-terminus, the 371-residue chain is Peptide chain release factor 2 (371 aa).

N5-methylglutamine is present on glutamine 247.

This sequence belongs to the prokaryotic/mitochondrial release factor family. In terms of processing, methylated by PrmC. Methylation increases the termination efficiency of RF2.

The protein resides in the cytoplasm. Peptide chain release factor 2 directs the termination of translation in response to the peptide chain termination codons UGA and UAA. The chain is Peptide chain release factor 2 from Caulobacter vibrioides (strain ATCC 19089 / CIP 103742 / CB 15) (Caulobacter crescentus).